A 667-amino-acid polypeptide reads, in one-letter code: Probable potassium transport system protein Kup (667 aa).

A run of 12 helical transmembrane segments spans residues Gly-16–Met-36, Val-58–Leu-78, Trp-101–Pro-121, Thr-146–Gly-166, Thr-167–Ile-187, Ile-221–Leu-241, Trp-253–Ala-273, Val-294–Gly-314, Leu-343–Phe-363, Tyr-373–Ile-393, Pro-399–Ala-419, and Phe-424–Ile-444.

This sequence belongs to the HAK/KUP transporter (TC 2.A.72) family.

The protein localises to the cell membrane. The catalysed reaction is K(+)(in) + H(+)(in) = K(+)(out) + H(+)(out). Its function is as follows. Transport of potassium into the cell. Likely operates as a K(+):H(+) symporter. The sequence is that of Probable potassium transport system protein Kup from Streptococcus equi subsp. equi (strain 4047).